A 720-amino-acid polypeptide reads, in one-letter code: DNA ligase (720 aa).

Residues Asp60–Asp64, Ser109–Leu110, and Glu140 each bind NAD(+). Lys142 serves as the catalytic N6-AMP-lysine intermediate. NAD(+) contacts are provided by Arg163 and Glu201. Positions Gly220 to Asp239 are disordered. NAD(+)-binding residues include Lys320 and Lys344. Residues Cys438, Cys441, Cys456, and Cys461 each coordinate Zn(2+). The BRCT domain occupies Lys619–Asp709.

Belongs to the NAD-dependent DNA ligase family. LigA subfamily. Mn(2+) is required as a cofactor. Requires Mg(2+) as cofactor.

The enzyme catalyses NAD(+) + (deoxyribonucleotide)n-3'-hydroxyl + 5'-phospho-(deoxyribonucleotide)m = (deoxyribonucleotide)n+m + AMP + beta-nicotinamide D-nucleotide.. In terms of biological role, DNA ligase that catalyzes the formation of phosphodiester linkages between 5'-phosphoryl and 3'-hydroxyl groups in double-stranded DNA using NAD as a coenzyme and as the energy source for the reaction. It is essential for DNA replication and repair of damaged DNA. The polypeptide is DNA ligase (Aquifex aeolicus (strain VF5)).